The chain runs to 200 residues: Glycosyl hydrolase family 19 domain-containing protein HI_1415 (200 aa).

Belongs to the glycosyl hydrolase 19 family.

The protein is Glycosyl hydrolase family 19 domain-containing protein HI_1415 of Haemophilus influenzae (strain ATCC 51907 / DSM 11121 / KW20 / Rd).